A 247-amino-acid polypeptide reads, in one-letter code: uncharacterized protein (247 aa).

The interval lysine 161–glutamate 187 is disordered. A compositionally biased stretch (basic and acidic residues) spans threonine 172–glutamate 187.

This is an uncharacterized protein from Mus musculus (Mouse).